Consider the following 612-residue polypeptide: T-cell immunomodulatory protein (612 aa).

A signal peptide spans 1-33; the sequence is MAAAGRLPSSWALFSPLLAGLALLGVGPVPARA. Residues Asn-36, Asn-95, Asn-139, Asn-146, Asn-151, Asn-176, Asn-188, Asn-226, and Asn-243 are each glycosylated (N-linked (GlcNAc...) asparagine). An FG-GAP; atypical repeat occupies 258-293; that stretch reads VVGQSAFADFDGDGHMDHLLPGCEDKNCQKSTIYLV. N-linked (GlcNAc...) asparagine glycosylation is found at Asn-353, Asn-371, and Asn-482. The chain crosses the membrane as a helical span at residues 567–587; it reads VLLTAIALIGVCVFILAIIGI.

The protein belongs to the TIP family. Interacts with RUVBL1, RUVBL2 and alpha-tubulin. As to expression, ubiquitously expressed.

It localises to the secreted. It is found in the membrane. Functionally, modulator of T-cell function. Has a protective effect in graft versus host disease model. The polypeptide is T-cell immunomodulatory protein (Homo sapiens (Human)).